The sequence spans 400 residues: Na(+)/H(+) antiporter NhaA (400 aa).

12 helical membrane passes run 26-46 (AGGI…NSPL), 71-91 (LIHW…GMEV), 107-127 (IFPA…YWFI), 137-157 (GWAI…ALLS), 166-186 (IFLL…IALF), 189-209 (HGLS…LILL), 212-232 (FKVS…ASVL), 233-253 (KSGV…PLKG), 273-293 (FVIL…GIDV), 299-319 (PLLL…IFGF), 340-360 (IFAV…LASL), and 373-393 (LSRL…YLFL).

Belongs to the NhaA Na(+)/H(+) (TC 2.A.33) antiporter family.

Its subcellular location is the cell inner membrane. The catalysed reaction is Na(+)(in) + 2 H(+)(out) = Na(+)(out) + 2 H(+)(in). Its function is as follows. Na(+)/H(+) antiporter that extrudes sodium in exchange for external protons. The polypeptide is Na(+)/H(+) antiporter NhaA (Haemophilus influenzae (strain PittGG)).